Here is a 67-residue protein sequence, read N- to C-terminus: Large ribosomal subunit protein uL29 (67 aa).

It belongs to the universal ribosomal protein uL29 family.

The protein is Large ribosomal subunit protein uL29 of Rubrobacter xylanophilus (strain DSM 9941 / JCM 11954 / NBRC 16129 / PRD-1).